The sequence spans 371 residues: 2-aminoethylphosphonate--pyruvate transaminase (371 aa).

K195 is subject to N6-(pyridoxal phosphate)lysine.

The protein belongs to the class-V pyridoxal-phosphate-dependent aminotransferase family. PhnW subfamily. As to quaternary structure, homotetramer; however this is for an enzyme with a molecular weight of 16500, which is in disagreement with the weight of this protein. Pyridoxal 5'-phosphate serves as cofactor.

It carries out the reaction (2-aminoethyl)phosphonate + pyruvate = phosphonoacetaldehyde + L-alanine. Its activity is regulated as follows. Inhibited by phosphonic acids and very slightly inhibited by aminophosphonic acids. Its function is as follows. Involved in phosphonate degradation. The protein is 2-aminoethylphosphonate--pyruvate transaminase (phnW) of Pseudomonas aeruginosa (strain ATCC 15692 / DSM 22644 / CIP 104116 / JCM 14847 / LMG 12228 / 1C / PRS 101 / PAO1).